A 972-amino-acid polypeptide reads, in one-letter code: 116 kDa U5 small nuclear ribonucleoprotein component (972 aa).

M1 carries the N-acetylmethionine modification. Residues 1 to 54 (MDTDLYDEFGNYIGPELDSDEDDDELGRETKDLDEMDDDDDDDDVGDHDDDHPG) are disordered. Composition is skewed to acidic residues over residues 17–26 (LDSDEDDDEL) and 34–48 (DEMD…VGDH). S19 is subject to Phosphoserine. A Glycyl lysine isopeptide (Lys-Gly) (interchain with G-Cter in SUMO1); alternate cross-link involves residue K64. A Glycyl lysine isopeptide (Lys-Gly) (interchain with G-Cter in SUMO2); alternate cross-link involves residue K64. The residue at position 86 (T86) is a Phosphothreonine. One can recognise a tr-type G domain in the interval 127 to 409 (ELIRNVTLCG…GIHLTKEELK (283 aa)). GTP is bound by residues 136–143 (GHLHHGKT), 204–208 (DTPGH), and 258–261 (NKID).

It belongs to the TRAFAC class translation factor GTPase superfamily. Classic translation factor GTPase family. EF-G/EF-2 subfamily. Component of the U5 snRNP and the U4/U6-U5 tri-snRNP complex, a building block of the spliceosome. The U4/U6-U5 tri-snRNP complex is composed of the U4, U6 and U5 snRNAs and at least PRPF3, PRPF4, PRPF6, PRPF8, PRPF31, SNRNP200, TXNL4A, SNRNP40, DDX23, CD2BP2, PPIH, SNU13, EFTUD2, SART1 and USP39. Component of the pre-catalytic, catalytic and post-catalytic spliceosome complexes. Component of the minor spliceosome, which splices U12-type introns. Within this complex, interacts with CRIPT. Interacts with ERBB4 and PRPF8. Interacts with PIH1D1. Interacts with RPAP3 and URI1 in a ZNHIT2-dependent manner. Interacts with NRDE2. Interacts with FAM50A. Interacts with UBL5.

It is found in the nucleus. In terms of biological role, required for pre-mRNA splicing as component of the spliceosome, including pre-catalytic, catalytic and post-catalytic spliceosomal complexes. Component of the U5 snRNP and the U4/U6-U5 tri-snRNP complex, a building block of the spliceosome. As a component of the minor spliceosome, involved in the splicing of U12-type introns in pre-mRNAs. The sequence is that of 116 kDa U5 small nuclear ribonucleoprotein component (EFTUD2) from Homo sapiens (Human).